Here is a 200-residue protein sequence, read N- to C-terminus: NAD(P)H dehydrogenase (quinone) (200 aa).

A Flavodoxin-like domain is found at 4–191 (VLVLYYSSYG…DIARYQGKHV (188 aa)). Residues 10-15 (SSYGHV) and 79-81 (TRF) each bind FMN. Y12 is an NAD(+) binding site. W99 lines the substrate pocket. Residues 114–120 (STGTQHG) and H135 each bind FMN.

This sequence belongs to the WrbA family. FMN serves as cofactor.

It carries out the reaction a quinone + NADH + H(+) = a quinol + NAD(+). It catalyses the reaction a quinone + NADPH + H(+) = a quinol + NADP(+). The protein is NAD(P)H dehydrogenase (quinone) of Burkholderia multivorans (strain ATCC 17616 / 249).